Consider the following 82-residue polypeptide: Host transcription reprogramming factor 10 (82 aa).

An N-terminal signal peptide occupies residues M1 to A19. The C2H2-type zinc finger occupies W57–H81.

Its subcellular location is the secreted. The protein localises to the host nucleus. Probable secreted effector that translocates into the nuclei of host cells to reprogram the expression of targeted genes by binding on effector binding elements in rice. The chain is Host transcription reprogramming factor 10 from Pyricularia oryzae (strain 70-15 / ATCC MYA-4617 / FGSC 8958) (Rice blast fungus).